The chain runs to 203 residues: NADH-quinone oxidoreductase subunit C (203 aa).

Belongs to the complex I 30 kDa subunit family. In terms of assembly, NDH-1 is composed of 14 different subunits. Subunits NuoB, C, D, E, F, and G constitute the peripheral sector of the complex.

It localises to the cell inner membrane. It catalyses the reaction a quinone + NADH + 5 H(+)(in) = a quinol + NAD(+) + 4 H(+)(out). In terms of biological role, NDH-1 shuttles electrons from NADH, via FMN and iron-sulfur (Fe-S) centers, to quinones in the respiratory chain. The immediate electron acceptor for the enzyme in this species is believed to be ubiquinone. Couples the redox reaction to proton translocation (for every two electrons transferred, four hydrogen ions are translocated across the cytoplasmic membrane), and thus conserves the redox energy in a proton gradient. The sequence is that of NADH-quinone oxidoreductase subunit C from Polaromonas sp. (strain JS666 / ATCC BAA-500).